Reading from the N-terminus, the 111-residue chain is Large ribosomal subunit protein uL24 (111 aa).

The span at 48–65 (EKPSRSNREGGRTEREAP) shows a compositional bias: basic and acidic residues. The interval 48–111 (EKPSRSNREG…AKTTGEELDD (64 aa)) is disordered. Positions 69–80 (SNVNPIDSNGES) are enriched in polar residues. Over residues 86–95 (KKVEDPDTGR) the composition is skewed to basic and acidic residues.

Belongs to the universal ribosomal protein uL24 family. As to quaternary structure, part of the 50S ribosomal subunit.

Its function is as follows. One of two assembly initiator proteins, it binds directly to the 5'-end of the 23S rRNA, where it nucleates assembly of the 50S subunit. In terms of biological role, one of the proteins that surrounds the polypeptide exit tunnel on the outside of the subunit. This Salinibacter ruber (strain DSM 13855 / M31) protein is Large ribosomal subunit protein uL24.